Here is a 459-residue protein sequence, read N- to C-terminus: Ribulose bisphosphate carboxylase large chain (459 aa).

At Lys-4 the chain carries N6,N6,N6-trimethyllysine. Residues Asn-113 and Thr-163 each contribute to the substrate site. Lys-165 serves as the catalytic Proton acceptor. A substrate-binding site is contributed by Lys-167. Mg(2+)-binding residues include Lys-191, Asp-193, and Glu-194. An N6-carboxylysine modification is found at Lys-191. The Proton acceptor role is filled by His-284. Arg-285, His-317, and Ser-369 together coordinate substrate.

It belongs to the RuBisCO large chain family. Type I subfamily. Heterohexadecamer of 8 large chains and 8 small chains; disulfide-linked. The disulfide link is formed within the large subunit homodimers. It depends on Mg(2+) as a cofactor. The disulfide bond which can form in the large chain dimeric partners within the hexadecamer appears to be associated with oxidative stress and protein turnover.

The protein localises to the plastid. It is found in the chloroplast. The enzyme catalyses 2 (2R)-3-phosphoglycerate + 2 H(+) = D-ribulose 1,5-bisphosphate + CO2 + H2O. The catalysed reaction is D-ribulose 1,5-bisphosphate + O2 = 2-phosphoglycolate + (2R)-3-phosphoglycerate + 2 H(+). In terms of biological role, ruBisCO catalyzes two reactions: the carboxylation of D-ribulose 1,5-bisphosphate, the primary event in carbon dioxide fixation, as well as the oxidative fragmentation of the pentose substrate in the photorespiration process. Both reactions occur simultaneously and in competition at the same active site. The polypeptide is Ribulose bisphosphate carboxylase large chain (Micranthes integrifolia (Wholeleaf saxifrage)).